The sequence spans 142 residues: Negative cofactor 2 complex subunit alpha (142 aa).

A compositionally biased stretch (polar residues) spans M1–L11. Positions M1–G43 are disordered. Phosphoserine is present on S27. The Histone-fold domain occupies V29–P137. Residue S141 is modified to Phosphoserine.

Belongs to the NC2 alpha/DRAP1 family. In terms of assembly, component of the NC2 (negative cofactor 2) complex composed of BUR6 and NCB2. The NC2 complex associates with SPT15/TBP. Interacts with SPT15/TBP.

The protein resides in the nucleus. Functionally, component of the NC2 complex which represses RNA polymerase II transcription through binding to SPT15/TBP and thereby inhibiting the assembly of the preinitiation complex. The NC2 complex may also mediate transcriptional activation from TATA-driven promoters through association with SPT15/TBP. This Saccharomyces cerevisiae (strain ATCC 204508 / S288c) (Baker's yeast) protein is Negative cofactor 2 complex subunit alpha (BUR6).